The sequence spans 390 residues: Sulfate adenylyltransferase (390 aa).

This sequence belongs to the sulfate adenylyltransferase family.

The catalysed reaction is sulfate + ATP + H(+) = adenosine 5'-phosphosulfate + diphosphate. It functions in the pathway sulfur metabolism; hydrogen sulfide biosynthesis; sulfite from sulfate: step 1/3. The sequence is that of Sulfate adenylyltransferase (sat) from Synechocystis sp. (strain ATCC 27184 / PCC 6803 / Kazusa).